A 247-amino-acid polypeptide reads, in one-letter code: 1-(5-phosphoribosyl)-5-[(5-phosphoribosylamino)methylideneamino] imidazole-4-carboxamide isomerase (247 aa).

Aspartate 8 functions as the Proton acceptor in the catalytic mechanism. Aspartate 129 (proton donor) is an active-site residue.

This sequence belongs to the HisA/HisF family.

It is found in the cytoplasm. It carries out the reaction 1-(5-phospho-beta-D-ribosyl)-5-[(5-phospho-beta-D-ribosylamino)methylideneamino]imidazole-4-carboxamide = 5-[(5-phospho-1-deoxy-D-ribulos-1-ylimino)methylamino]-1-(5-phospho-beta-D-ribosyl)imidazole-4-carboxamide. The protein operates within amino-acid biosynthesis; L-histidine biosynthesis; L-histidine from 5-phospho-alpha-D-ribose 1-diphosphate: step 4/9. This Rhodospirillum centenum (strain ATCC 51521 / SW) protein is 1-(5-phosphoribosyl)-5-[(5-phosphoribosylamino)methylideneamino] imidazole-4-carboxamide isomerase.